The sequence spans 156 residues: ATP synthase subunit b (156 aa).

Residues 7-27 (LIVQMLVFVVFIGLTMKFIWP) traverse the membrane as a helical segment.

Belongs to the ATPase B chain family. In terms of assembly, F-type ATPases have 2 components, F(1) - the catalytic core - and F(0) - the membrane proton channel. F(1) has five subunits: alpha(3), beta(3), gamma(1), delta(1), epsilon(1). F(0) has three main subunits: a(1), b(2) and c(10-14). The alpha and beta chains form an alternating ring which encloses part of the gamma chain. F(1) is attached to F(0) by a central stalk formed by the gamma and epsilon chains, while a peripheral stalk is formed by the delta and b chains.

It is found in the cell inner membrane. In terms of biological role, f(1)F(0) ATP synthase produces ATP from ADP in the presence of a proton or sodium gradient. F-type ATPases consist of two structural domains, F(1) containing the extramembraneous catalytic core and F(0) containing the membrane proton channel, linked together by a central stalk and a peripheral stalk. During catalysis, ATP synthesis in the catalytic domain of F(1) is coupled via a rotary mechanism of the central stalk subunits to proton translocation. Its function is as follows. Component of the F(0) channel, it forms part of the peripheral stalk, linking F(1) to F(0). The protein is ATP synthase subunit b of Coxiella burnetii (strain CbuK_Q154) (Coxiella burnetii (strain Q154)).